The primary structure comprises 129 residues: Protein BUNDLE SHEATH DEFECTIVE 2, chloroplastic (129 aa).

The transit peptide at Met1–Lys43 directs the protein to the chloroplast. The CR-type zinc finger occupies Gln49–Thr123. The Zn(2+) site is built by Cys62, Cys65, Asn68, Cys73, Cys76, Cys97, Cys100, Glu105, Cys108, and Cys111.

The protein belongs to the BSD2 chaperone family. In terms of assembly, interacts with the RuBisCo large subunit (RbcL) assembled as an intermediate complex made of eight RbcL and eight BSD2 subunits. In terms of tissue distribution, expressed in shoot tissues, in both bundle sheath and mesophyll cells.

Its subcellular location is the plastid. It localises to the chloroplast stroma. Its function is as follows. Chloroplast chaperone required for RuBisCo complex biogenesis and translational regulation of the RuBisCo large subunit (RbcL). Stabilizes an end-state assembly intermediate of eight RbcL subunits until the small subunits (RBCSs) become available to produce a complete stable RuBisCo complex containing eight small and eight large subunits. Involved in the differentiation of bundle sheath cells, especially chloroplast structure. This chain is Protein BUNDLE SHEATH DEFECTIVE 2, chloroplastic, found in Zea mays (Maize).